The primary structure comprises 444 residues: UDP-N-acetylmuramate--L-alanine ligase (444 aa).

111 to 117 is an ATP binding site; the sequence is GAHGKTS.

It belongs to the MurCDEF family.

The protein resides in the cytoplasm. It catalyses the reaction UDP-N-acetyl-alpha-D-muramate + L-alanine + ATP = UDP-N-acetyl-alpha-D-muramoyl-L-alanine + ADP + phosphate + H(+). The protein operates within cell wall biogenesis; peptidoglycan biosynthesis. Cell wall formation. In Leuconostoc citreum (strain KM20), this protein is UDP-N-acetylmuramate--L-alanine ligase.